The sequence spans 69 residues: MIYKVYYQENANEIPVRENTKSLYLEAASEREVRQKLKDRNYNIEFVQLLEGNYLEYEQASPNFVLEEI.

Belongs to the RNA polymerase subunit epsilon family. As to quaternary structure, RNAP is composed of a core of 2 alpha, a beta and a beta' subunit. The core is associated with a delta subunit, and at least one of epsilon or omega. When a sigma factor is associated with the core the holoenzyme is formed, which can initiate transcription.

It carries out the reaction RNA(n) + a ribonucleoside 5'-triphosphate = RNA(n+1) + diphosphate. A non-essential component of RNA polymerase (RNAP). The polypeptide is DNA-directed RNA polymerase subunit epsilon (Lysinibacillus sphaericus (strain C3-41)).